The primary structure comprises 3848 residues: Intermembrane lipid transfer protein tipC (3848 aa).

Residues 4-112 enclose the Chorein N-terminal domain; sequence HIAASVLTKY…KFQDEKQAKL (109 aa). Disordered stretches follow at residues 243-268, 450-481, 966-985, 1174-1219, 1326-1345, 1907-1926, 2024-2047, 2209-2290, 2330-2353, 2509-2541, 3209-3228, and 3310-3342; these read IKKE…DEIE, LKLQ…TGGG, QQLQ…SPPL, KNNQ…NNNS, ERKL…GVST, ENIN…TTTT, DDYN…NQLP, IKPA…NKNL, FNPK…SPLL, KQLN…NLLG, GITN…NNND, and INQQ…NTTQ. 2 stretches are compositionally biased toward low complexity: residues 251 to 260 and 452 to 477; these read QQQQQQQQQG and LQQQ…PSTS. Positions 1175 to 1190 are enriched in low complexity; sequence NNQNNNQNNNQNNNQN. The span at 1191 to 1200 shows a compositional bias: polar residues; that stretch reads INESSPTVFI. Positions 1202 to 1211 are enriched in pro residues; the sequence is SPPPPPPPPL. Residues 1333–1345 are compositionally biased toward low complexity; sequence TSPTTPSSSGVST. Low complexity-rich tracts occupy residues 2029-2044, 2217-2289, and 2335-2353; these read DNYN…NSNN, NNNN…NNKN, and SSSS…SPLL. Low complexity-rich tracts occupy residues 3212 to 3228 and 3311 to 3342; these read NDPN…NNND and NQQP…NTTQ.

Belongs to the VPS13 family.

It is found in the membrane. Its function is as follows. Mediates the transfer of lipids between membranes at organelle contact sites. The polypeptide is Intermembrane lipid transfer protein tipC (tipC) (Dictyostelium discoideum (Social amoeba)).